A 486-amino-acid chain; its full sequence is Siroheme synthase (486 aa).

The precorrin-2 dehydrogenase /sirohydrochlorin ferrochelatase stretch occupies residues 1–204; sequence MNYLPIFVDL…HQIEQAEALV (204 aa). NAD(+) is bound by residues 22–23 and 43–44; these read HI and EK. Ser128 bears the Phosphoserine mark. The tract at residues 216 to 486 is uroporphyrinogen-III C-methyltransferase; sequence GEVSLVGAGP…NKETHWKQAA (271 aa). Position 225 (Pro225) interacts with S-adenosyl-L-methionine. Catalysis depends on Asp248, which acts as the Proton acceptor. The active-site Proton donor is the Lys270. S-adenosyl-L-methionine contacts are provided by residues 301–303, Val306, 331–332, Met383, and Gly412; these read GGD and TA.

This sequence in the N-terminal section; belongs to the precorrin-2 dehydrogenase / sirohydrochlorin ferrochelatase family. The protein in the C-terminal section; belongs to the precorrin methyltransferase family.

The catalysed reaction is uroporphyrinogen III + 2 S-adenosyl-L-methionine = precorrin-2 + 2 S-adenosyl-L-homocysteine + H(+). It carries out the reaction precorrin-2 + NAD(+) = sirohydrochlorin + NADH + 2 H(+). It catalyses the reaction siroheme + 2 H(+) = sirohydrochlorin + Fe(2+). It functions in the pathway cofactor biosynthesis; adenosylcobalamin biosynthesis; precorrin-2 from uroporphyrinogen III: step 1/1. The protein operates within cofactor biosynthesis; adenosylcobalamin biosynthesis; sirohydrochlorin from precorrin-2: step 1/1. It participates in porphyrin-containing compound metabolism; siroheme biosynthesis; precorrin-2 from uroporphyrinogen III: step 1/1. Its pathway is porphyrin-containing compound metabolism; siroheme biosynthesis; siroheme from sirohydrochlorin: step 1/1. It functions in the pathway porphyrin-containing compound metabolism; siroheme biosynthesis; sirohydrochlorin from precorrin-2: step 1/1. In terms of biological role, multifunctional enzyme that catalyzes the SAM-dependent methylations of uroporphyrinogen III at position C-2 and C-7 to form precorrin-2 via precorrin-1. Then it catalyzes the NAD-dependent ring dehydrogenation of precorrin-2 to yield sirohydrochlorin. Finally, it catalyzes the ferrochelation of sirohydrochlorin to yield siroheme. The sequence is that of Siroheme synthase from Actinobacillus pleuropneumoniae serotype 3 (strain JL03).